Here is a 385-residue protein sequence, read N- to C-terminus: Putative F-box protein At1g49610 (385 aa).

The F-box domain occupies 25–73; it reads VDSISSLPDVILQENLSLIPTKFAIRTSVLSKRWRHVWSETPSLDFDDC.

This Arabidopsis thaliana (Mouse-ear cress) protein is Putative F-box protein At1g49610.